A 454-amino-acid polypeptide reads, in one-letter code: Phosphoglucosamine mutase (454 aa).

The Phosphoserine intermediate role is filled by Ser-101. Mg(2+) is bound by residues Ser-101, Asp-243, Asp-245, and Asp-247. Ser-101 bears the Phosphoserine mark.

This sequence belongs to the phosphohexose mutase family. The cofactor is Mg(2+). In terms of processing, activated by phosphorylation.

The enzyme catalyses alpha-D-glucosamine 1-phosphate = D-glucosamine 6-phosphate. In terms of biological role, catalyzes the conversion of glucosamine-6-phosphate to glucosamine-1-phosphate. The polypeptide is Phosphoglucosamine mutase (Geobacter sp. (strain M21)).